Reading from the N-terminus, the 1196-residue chain is MGERAYHGAQVCSGTNPRKCQDLGDSILLLLGSFILLNVWINVVTLLWKHLKSSLRILFRHFFPKDKQPSGSHPICICSSVDPKNLCSKVSSRVHPRPGFLLRRVNHLDSWIPDTNDEKVSACCCVPPKCGHAGVPRESARGLYKAGMMGGGEAPQVTASKAQASLLSRPETSSQFPKMSKLDTGPCHLPQESKTKTPDCAPAEAPAQAQVHSPTHTPVCTPTHPWTRSTDHTAVHTPAHSWTHSKARTPEGTHSQAQDTSAQAQAHTSAPTPAQTPAHIQAHTPAPTPAKASAHTKAHTSAQAQTHSPPHTPEYTHSQAHSPEHTSAHSPAQAPMPVPAHPQAHAPEYTSAHAPAYIPDHSHLVRSSVPVPTSAPAPPGTLAPATTPVLAPTPAPVPASAPSPAPALVMALTTTPVPDPVPATTPAPIITPIPSTPPAFSHDLSTGHVVYDARREKQNFFHMSSPQNPEYSRKDLATLFRPQEGQDLVSSGISEQTKQCSGDSAKLPAGSILGYLELRNMEWKNSDDAKDKFPQTKTSPYCSFHPCSSEKNTDSQAPFYPKFLAYSRDTACAKTCFHSATTAQSSVCTLPPPFTLSLPLVPPRSFVPPQPTNHQRPSTLIQTPTVLPTSKSPQSILTSQFPIPSLFATISQPLIQPQCPECHESLGLTQDSGLQRTPGPSKDSRVPRNLDLAQNPDLYKNPGLTQDPGLHENPGLAPNQGLHEFPGLPQDSYLCQNPSPSQDFGLHKNSGITQDSHPQKNTGLTQEAGILRSPCLTQSPGLHKKTPFTQTSDLQRSSGFTQDSGIYRNLEPNQETVIYKNQDLSQATDHQKNLGSSKDSGGHKNTGNVQDPGVCSTAGLTEDSGSQKGPYVPQDSEVNKSSGVIQESFLHKSPGLVQTSGLPKCSGLTQNSGDYKNPGLIQDCGGHKVKGLTQDSNLPSLTQATKVERRFSLPQDVGVYRSSEHSQDSNLHKCPGINQDPGPHKDPALVQDSGLPKISGLTQESGPYKSSCLIPDPSLYKNPSPALGSDFVQLLSLLQTPKSTLSLMKSSVPEKAAQKEDAQRHVLWARVQLNENSCPSKAQVVSNDLQTFSEVPVLIELQSSSWRAGSQHGAYRPVDTVPSGYQNYRQMSMPTHINWKSHCPGPGTQAGHVVFDARQRRLAVGKDKCEALSPRRLHQEAPSNSGKPSRSGDIRM.

The helical transmembrane segment at 27–47 (ILLLLGSFILLNVWINVVTLL) threads the bilayer. Disordered stretches follow at residues 150–345 (GGGE…PQAH), 367–402 (SSVPVPTSAPAPPGTLAPATTPVLAPTPAPVPASAP), 669–762 (TQDS…QKNT), 775–806 (CLTQSPGLHKKTPFTQTSDLQRSSGFTQDSGI), 826–877 (QATD…QDSE), 960–1009 (YRSS…GPYK), and 1168–1196 (KCEALSPRRLHQEAPSNSGKPSRSGDIRM). The segment covering 157-177 (VTASKAQASLLSRPETSSQFP) has biased composition (polar residues). Low complexity-rich tracts occupy residues 212 to 227 (HSPTHTPVCTPTHPWT) and 253 to 279 (THSQAQDTSAQAQAHTSAPTPAQTPAH). Residues 299 to 321 (HTSAQAQTHSPPHTPEYTHSQAH) are compositionally biased toward polar residues. Positions 391–402 (APTPAPVPASAP) are enriched in pro residues. Polar residues-rich tracts occupy residues 733 to 742 (YLCQNPSPSQ), 750 to 762 (SGITQDSHPQKNT), 787 to 804 (PFTQTSDLQRSSGFTQDS), and 826 to 849 (QATDHQKNLGSSKDSGGHKNTGNV). The segment covering 962 to 971 (SSEHSQDSNL) has biased composition (basic and acidic residues).

Its subcellular location is the membrane. This is an uncharacterized protein from Homo sapiens (Human).